The chain runs to 510 residues: Ribose import ATP-binding protein RbsA 1 (510 aa).

ABC transporter domains are found at residues Leu20 to Asp256 and Val266 to Ala510. Gly52–Ser59 provides a ligand contact to ATP.

The protein belongs to the ABC transporter superfamily. Ribose importer (TC 3.A.1.2.1) family. The complex is composed of an ATP-binding protein (RbsA), two transmembrane proteins (RbsC) and a solute-binding protein (RbsB).

Its subcellular location is the cell inner membrane. It carries out the reaction D-ribose(out) + ATP + H2O = D-ribose(in) + ADP + phosphate + H(+). Its function is as follows. Part of the ABC transporter complex RbsABC involved in ribose import. Responsible for energy coupling to the transport system. In Agrobacterium fabrum (strain C58 / ATCC 33970) (Agrobacterium tumefaciens (strain C58)), this protein is Ribose import ATP-binding protein RbsA 1.